The sequence spans 336 residues: Glycerol-3-phosphate dehydrogenase [NAD(P)+] (336 aa).

NADPH-binding residues include S11, W12, and K106. Residues K106, G134, and S136 each contribute to the sn-glycerol 3-phosphate site. NADPH is bound at residue A138. Residues K189, D242, S252, R253, and N254 each contribute to the sn-glycerol 3-phosphate site. K189 (proton acceptor) is an active-site residue. An NADPH-binding site is contributed by R253. Positions 277 and 279 each coordinate NADPH.

Belongs to the NAD-dependent glycerol-3-phosphate dehydrogenase family.

The protein localises to the cytoplasm. The enzyme catalyses sn-glycerol 3-phosphate + NAD(+) = dihydroxyacetone phosphate + NADH + H(+). It carries out the reaction sn-glycerol 3-phosphate + NADP(+) = dihydroxyacetone phosphate + NADPH + H(+). Its pathway is membrane lipid metabolism; glycerophospholipid metabolism. In terms of biological role, catalyzes the reduction of the glycolytic intermediate dihydroxyacetone phosphate (DHAP) to sn-glycerol 3-phosphate (G3P), the key precursor for phospholipid synthesis. In Agathobacter rectalis (strain ATCC 33656 / DSM 3377 / JCM 17463 / KCTC 5835 / VPI 0990) (Eubacterium rectale), this protein is Glycerol-3-phosphate dehydrogenase [NAD(P)+].